We begin with the raw amino-acid sequence, 79 residues long: uncharacterized protein (79 aa).

The helical transmembrane segment at 53-73 (LFFAYMVAYIGFGILSIGMIV) threads the bilayer.

The protein resides in the membrane. This is an uncharacterized protein from Escherichia coli O157:H7.